A 149-amino-acid polypeptide reads, in one-letter code: Calmodulin-like protein 3 (149 aa).

EF-hand domains are found at residues 8 to 43, 44 to 79, 81 to 116, and 117 to 149; these read EQIAEFKEAFSLFDKDGDGCITTQELGTVMRSLGQN, PTEAELQDMVNEIDKDGNGTVDFPEFLTMMSRKMKD, DSEEEIREAFRVFDKDGNGFVSAAELRHVMTRLGEK, and LSDEEVDEMIQAADTDGDGQVNYEEFVHMLVSK. Ca(2+) is bound by residues Asp-21, Asp-23, Asp-25, Cys-27, Glu-32, Asp-57, Asp-59, Asn-61, Thr-63, Glu-68, Asp-94, Asp-96, Asn-98, Glu-105, Asp-130, Asp-132, Asp-134, Gln-136, and Glu-141.

This sequence belongs to the calmodulin family. As to quaternary structure, interacts with MYO10, the interaction is calcium-dependent and essential for MYO10 function in filopodial extension.

May function as a specific light chain of unconventional myosin-10 (MYO10), also enhances MYO10 translation, possibly by acting as a chaperone for the emerging MYO10 heavy chain protein. May compete with calmodulin by binding, with different affinities, to cellular substrates. The sequence is that of Calmodulin-like protein 3 (Calml3) from Rattus norvegicus (Rat).